The following is a 157-amino-acid chain: MAEVANNEAQQNFQIQRVFLKDISFEAPNSPDMFQKEWNPDVKLDLDTQSRELGEGVYEVILRLTVTVKNAEETAFLCEVQQGGIFTVSGMEAPQLAHCLGAFSPNILFPYARETISSLVVKGTFPQLNLAPVNFDALFMNYLQNQAEANTESTEKA.

This sequence belongs to the SecB family. As to quaternary structure, homotetramer, a dimer of dimers. One homotetramer interacts with 1 SecA dimer.

The protein resides in the cytoplasm. Functionally, one of the proteins required for the normal export of preproteins out of the cell cytoplasm. It is a molecular chaperone that binds to a subset of precursor proteins, maintaining them in a translocation-competent state. It also specifically binds to its receptor SecA. In Photobacterium profundum (strain SS9), this protein is Protein-export protein SecB.